The primary structure comprises 76 residues: Amyloid protein A (76 aa).

Belongs to the SAA family. As to expression, expressed by the liver; secreted in plasma.

It localises to the secreted. In terms of biological role, major acute phase reactant. Apolipoprotein of the HDL complex. This is Amyloid protein A (SAA1) from Macaca mulatta (Rhesus macaque).